The primary structure comprises 182 residues: Nuclear cap-binding protein subunit 2 (182 aa).

Residues tyrosine 13, tyrosine 35, 104–108, 115–119, and 125–126 each bind mRNA; these read RADLD, RQYGR, and QV. Positions 32–110 constitute an RRM domain; that stretch reads NCVYVGNLSF…RIIRADLDHG (79 aa). Residues 114 to 182 are disordered; that stretch reads GRQYGRGASG…NPRYNRWKKN (69 aa). Positions 126–136 are enriched in basic and acidic residues; it reads VRDEMREEFDP. The span at 145-175 shows a compositional bias: polar residues; it reads RQPTSSRQLANYSGISSAPLGSSLELQSNPR.

Belongs to the RRM NCBP2 family. In terms of assembly, component of the nuclear cap-binding complex (CBC), a heterodimer composed of cbc1 and cbc2 that interacts with capped RNAs.

The protein resides in the cytoplasm. It localises to the perinuclear region. It is found in the nucleus. Functionally, component of the CBC complex, which binds co-transcriptionally to the 5' cap of pre-mRNAs and is involved in maturation, export and degradation of nuclear mRNAs. This Schizosaccharomyces pombe (strain 972 / ATCC 24843) (Fission yeast) protein is Nuclear cap-binding protein subunit 2 (cbc2).